The chain runs to 360 residues: Phosphoserine aminotransferase (360 aa).

R41 serves as a coordination point for L-glutamate. Pyridoxal 5'-phosphate contacts are provided by W101, T152, D172, and Q195. Residue K196 is modified to N6-(pyridoxal phosphate)lysine. 237 to 238 (NT) contacts pyridoxal 5'-phosphate.

The protein belongs to the class-V pyridoxal-phosphate-dependent aminotransferase family. SerC subfamily. As to quaternary structure, homodimer. Pyridoxal 5'-phosphate serves as cofactor.

It is found in the cytoplasm. It catalyses the reaction O-phospho-L-serine + 2-oxoglutarate = 3-phosphooxypyruvate + L-glutamate. The enzyme catalyses 4-(phosphooxy)-L-threonine + 2-oxoglutarate = (R)-3-hydroxy-2-oxo-4-phosphooxybutanoate + L-glutamate. It functions in the pathway amino-acid biosynthesis; L-serine biosynthesis; L-serine from 3-phospho-D-glycerate: step 2/3. It participates in cofactor biosynthesis; pyridoxine 5'-phosphate biosynthesis; pyridoxine 5'-phosphate from D-erythrose 4-phosphate: step 3/5. In terms of biological role, catalyzes the reversible conversion of 3-phosphohydroxypyruvate to phosphoserine and of 3-hydroxy-2-oxo-4-phosphonooxybutanoate to phosphohydroxythreonine. The polypeptide is Phosphoserine aminotransferase (Burkholderia cenocepacia (strain HI2424)).